A 315-amino-acid chain; its full sequence is Universal stress protein E (315 aa).

Belongs to the universal stress protein A family.

The protein localises to the cytoplasm. In terms of biological role, required for resistance to DNA-damaging agents. The polypeptide is Universal stress protein E (uspE) (Salmonella typhi).